Here is a 613-residue protein sequence, read N- to C-terminus: Dihydroxy-acid dehydratase 3 (613 aa).

Residue D81 coordinates Mg(2+). Position 122 (C122) interacts with [2Fe-2S] cluster. Mg(2+) is bound by residues D123 and K124. Residue K124 is modified to N6-carboxylysine. Residue C197 participates in [2Fe-2S] cluster binding. A Mg(2+)-binding site is contributed by E493. The Proton acceptor role is filled by S519.

The protein belongs to the IlvD/Edd family. In terms of assembly, homodimer. It depends on [2Fe-2S] cluster as a cofactor. Requires Mg(2+) as cofactor.

The catalysed reaction is (2R)-2,3-dihydroxy-3-methylbutanoate = 3-methyl-2-oxobutanoate + H2O. It carries out the reaction (2R,3R)-2,3-dihydroxy-3-methylpentanoate = (S)-3-methyl-2-oxopentanoate + H2O. The protein operates within amino-acid biosynthesis; L-isoleucine biosynthesis; L-isoleucine from 2-oxobutanoate: step 3/4. It participates in amino-acid biosynthesis; L-valine biosynthesis; L-valine from pyruvate: step 3/4. Functions in the biosynthesis of branched-chain amino acids. Catalyzes the dehydration of (2R,3R)-2,3-dihydroxy-3-methylpentanoate (2,3-dihydroxy-3-methylvalerate) into 2-oxo-3-methylpentanoate (2-oxo-3-methylvalerate) and of (2R)-2,3-dihydroxy-3-methylbutanoate (2,3-dihydroxyisovalerate) into 2-oxo-3-methylbutanoate (2-oxoisovalerate), the penultimate precursor to L-isoleucine and L-valine, respectively. The chain is Dihydroxy-acid dehydratase 3 from Nocardia farcinica (strain IFM 10152).